Consider the following 607-residue polypeptide: Protease Do-like 2, chloroplastic (607 aa).

Positions 41 to 104 (SSNIKRKSSR…LSDFSRDQQT (64 aa)) are disordered. The span at 87 to 104 (PKKEKKESLSDFSRDQQT) shows a compositional bias: basic and acidic residues. A serine protease region spans residues 118 to 317 (VVKVYCTHTA…LTDYERNGKY (200 aa)). Catalysis depends on charge relay system residues His-159, Asp-190, and Ser-268. The 96-residue stretch at 308-403 (LTDYERNGKY…YLISQKFAGD (96 aa)) folds into the PDZ domain.

The protein belongs to the peptidase S1C family.

Its subcellular location is the plastid. It is found in the chloroplast thylakoid membrane. Its function is as follows. Serine protease that performs the primary cleavage of the photodamaged D1 protein in plant photosystem II. This is Protease Do-like 2, chloroplastic (DEGP2) from Arabidopsis thaliana (Mouse-ear cress).